A 231-amino-acid chain; its full sequence is Large ribosomal subunit protein uL1 (231 aa).

It belongs to the universal ribosomal protein uL1 family. As to quaternary structure, part of the 50S ribosomal subunit.

Binds directly to 23S rRNA. The L1 stalk is quite mobile in the ribosome, and is involved in E site tRNA release. In terms of biological role, protein L1 is also a translational repressor protein, it controls the translation of the L11 operon by binding to its mRNA. The polypeptide is Large ribosomal subunit protein uL1 (Paracidovorax citrulli (strain AAC00-1) (Acidovorax citrulli)).